The following is a 128-amino-acid chain: Fruiting body differentiation protein 16 (128 aa).

The signal sequence occupies residues 1 to 19 (MLFSHIVFVALSVFGLVQA).

Plays a role in the regulation of fruiting body development. This chain is Fruiting body differentiation protein 16, found in Flammulina velutipes (Agaricus velutipes).